Consider the following 172-residue polypeptide: Small ribosomal subunit protein uS5 (172 aa).

The S5 DRBM domain maps to 15 to 78 (YIEKLVNIRR…DKARKRMKSV (64 aa)).

Belongs to the universal ribosomal protein uS5 family. As to quaternary structure, part of the 30S ribosomal subunit. Contacts proteins S4 and S8.

With S4 and S12 plays an important role in translational accuracy. Its function is as follows. Located at the back of the 30S subunit body where it stabilizes the conformation of the head with respect to the body. The chain is Small ribosomal subunit protein uS5 from Ruthia magnifica subsp. Calyptogena magnifica.